We begin with the raw amino-acid sequence, 377 residues long: Proteinase-activated receptor 3 (377 aa).

An N-terminal signal peptide occupies residues 1–19 (MRAAIFAAIGALLLSPASC). A propeptide spans 20-38 (QSGMEYDADNLAKPTLSIK) (removed for receptor activation). Topologically, residues 39 to 94 (TFRGAPQNSFEEFPLSAIEGWTGTTKTVKIKCPEELDSNLHVNNATMGYLSSPLST) are extracellular. Asn-82 is a glycosylation site (N-linked (GlcNAc...) asparagine). Residues 95-120 (KLIPAIYILVFAVGMPANAVTLWMLF) traverse the membrane as a helical segment. Residues 121–127 (RTRTIRM) lie on the Cytoplasmic side of the membrane. A helical transmembrane segment spans residues 128-147 (TIFYTNLAIADFLFCVTLPF). At 148 to 166 (RIAYHLNGNNWVFGEVMCR) the chain is on the extracellular side. Cys-165 and Cys-244 are disulfide-bonded. Residues 167-188 (ATTVIFYGNMYCSILLLACISI) form a helical membrane-spanning segment. At 189–205 (NRYLAIVHPFTYRGLPK) the chain is on the cytoplasmic side. Residues 206 to 229 (RTYALLTCGLVWTTVFLYMLPFFI) traverse the membrane as a helical segment. At 230–259 (LKQEYYLVQQDITTCHDVHNTCESSSPFQL) the chain is on the extracellular side. A helical transmembrane segment spans residues 260-279 (YYFISLAFFGFLIPFLVIIY). Residues 280–296 (CYTAIIWTLNAKDRRWL) lie on the Cytoplasmic side of the membrane. A helical transmembrane segment spans residues 297 to 321 (WYIKASLLTFVIFTICFAPSNIILI). The Extracellular segment spans residues 322–335 (IHHANYYYSNTDAL). The helical transmembrane segment at 336 to 360 (YFVYLIALCLGSLNSCLDPFLYFLM) threads the bilayer. The Cytoplasmic portion of the chain corresponds to 361–377 (SKITDHSTAYLTMVKLS).

It belongs to the G-protein coupled receptor 1 family. Interacts with INSC/inscuteable and GPSM2. A proteolytic cleavage generates a new N-terminus that functions as a tethered ligand.

Its subcellular location is the cell membrane. Its function is as follows. Receptor for activated thrombin coupled to G proteins that stimulate phosphoinositide hydrolysis. In Bos taurus (Bovine), this protein is Proteinase-activated receptor 3 (F2RL2).